The following is a 269-amino-acid chain: Hydroxyethylthiazole kinase (269 aa).

Methionine 45 contacts substrate. 2 residues coordinate ATP: arginine 121 and threonine 167. Glycine 194 contacts substrate.

It belongs to the Thz kinase family. Mg(2+) is required as a cofactor.

The enzyme catalyses 5-(2-hydroxyethyl)-4-methylthiazole + ATP = 4-methyl-5-(2-phosphooxyethyl)-thiazole + ADP + H(+). Its pathway is cofactor biosynthesis; thiamine diphosphate biosynthesis; 4-methyl-5-(2-phosphoethyl)-thiazole from 5-(2-hydroxyethyl)-4-methylthiazole: step 1/1. Catalyzes the phosphorylation of the hydroxyl group of 4-methyl-5-beta-hydroxyethylthiazole (THZ). The chain is Hydroxyethylthiazole kinase from Bacillus mycoides (strain KBAB4) (Bacillus weihenstephanensis).